Here is a 572-residue protein sequence, read N- to C-terminus: Proline--tRNA ligase (572 aa).

The protein belongs to the class-II aminoacyl-tRNA synthetase family. ProS type 1 subfamily. In terms of assembly, homodimer.

It is found in the cytoplasm. It carries out the reaction tRNA(Pro) + L-proline + ATP = L-prolyl-tRNA(Pro) + AMP + diphosphate. Its function is as follows. Catalyzes the attachment of proline to tRNA(Pro) in a two-step reaction: proline is first activated by ATP to form Pro-AMP and then transferred to the acceptor end of tRNA(Pro). As ProRS can inadvertently accommodate and process non-cognate amino acids such as alanine and cysteine, to avoid such errors it has two additional distinct editing activities against alanine. One activity is designated as 'pretransfer' editing and involves the tRNA(Pro)-independent hydrolysis of activated Ala-AMP. The other activity is designated 'posttransfer' editing and involves deacylation of mischarged Ala-tRNA(Pro). The misacylated Cys-tRNA(Pro) is not edited by ProRS. The chain is Proline--tRNA ligase from Escherichia coli O127:H6 (strain E2348/69 / EPEC).